Consider the following 101-residue polypeptide: Small ribosomal subunit protein uS14 (101 aa).

The protein belongs to the universal ribosomal protein uS14 family. As to quaternary structure, part of the 30S ribosomal subunit. Contacts proteins S3 and S10.

In terms of biological role, binds 16S rRNA, required for the assembly of 30S particles and may also be responsible for determining the conformation of the 16S rRNA at the A site. This is Small ribosomal subunit protein uS14 from Gluconobacter oxydans (strain 621H) (Gluconobacter suboxydans).